Consider the following 180-residue polypeptide: Cancer/testis antigen 1 (180 aa).

2 stretches are compositionally biased toward gly residues: residues M1 to G47 and G55 to G66. Residues M1–G66 are disordered.

This sequence belongs to the CTAG/PCC1 family. As to expression, expressed in testis and ovary and in a wide variety of cancers. Detected in uterine myometrium. Expressed from 18 weeks until birth in human fetal testis. In the adult testis, is strongly expressed in spermatogonia and in primary spermatocytes, but not in post-meiotic cells or in testicular somatic cells (at protein level).

Its subcellular location is the cytoplasm. The polypeptide is Cancer/testis antigen 1 (CTAG1A) (Homo sapiens (Human)).